The sequence spans 399 residues: Multi-drug resistance efflux pump PmrA (399 aa).

The next 10 membrane-spanning stretches (helical) occupy residues 12-34, 49-71, 84-106, 140-162, 167-186, 217-239, 248-270, 306-328, 340-362, and 366-388; these read IAWF…MPIF, AGLA…GILA, GLAM…LIFL, LSTG…AELF, VFLL…ICFI, LFLT…ALYV, LLFV…AGVM, LGLY…NALL, VFAF…GSAV, and FGYH…FNLI.

Belongs to the major facilitator superfamily. TCR/Tet family.

Its subcellular location is the cell membrane. Efflux pump for various substrates. The protein is Multi-drug resistance efflux pump PmrA (pmrA) of Streptococcus pneumoniae serotype 4 (strain ATCC BAA-334 / TIGR4).